A 463-amino-acid polypeptide reads, in one-letter code: Chaperone SurA (463 aa).

A signal peptide spans 1–25 (MTKPFSVVLASLLAITSTVSPLASA). 2 consecutive PpiC domains span residues 174 to 276 (GSQY…KLVE) and 289 to 388 (VTEY…QRVG). 2 disordered regions span residues 328-348 (QATA…GDLG) and 432-463 (RTGD…KPTR). The segment covering 440-452 (NATAAPAKSADPA) has biased composition (low complexity). A compositionally biased stretch (pro residues) spans 453–463 (APSPPPAKPTR).

Its subcellular location is the periplasm. The enzyme catalyses [protein]-peptidylproline (omega=180) = [protein]-peptidylproline (omega=0). Chaperone involved in the correct folding and assembly of outer membrane proteins. Recognizes specific patterns of aromatic residues and the orientation of their side chains, which are found more frequently in integral outer membrane proteins. May act in both early periplasmic and late outer membrane-associated steps of protein maturation. The chain is Chaperone SurA from Xanthomonas euvesicatoria pv. vesicatoria (strain 85-10) (Xanthomonas campestris pv. vesicatoria).